The following is a 234-amino-acid chain: DNA repair and recombination protein RadB (234 aa).

The protein belongs to the eukaryotic RecA-like protein family. RadB subfamily.

Its function is as follows. Involved in DNA repair and in homologous recombination. May regulate the cleavage reactions of the branch-structured DNA. Has a very weak ATPase activity that is not stimulated by DNA. Binds DNA but does not promote DNA strands exchange. This is DNA repair and recombination protein RadB from Methanobrevibacter smithii (strain ATCC 35061 / DSM 861 / OCM 144 / PS).